The chain runs to 311 residues: Coproporphyrin III ferrochelatase 1 (311 aa).

Residues tyrosine 12, arginine 29, 45–46, serine 53, and tyrosine 124 contribute to the Fe-coproporphyrin III site; that span reads RY. Residues histidine 182 and glutamate 263 each contribute to the Fe(2+) site.

Belongs to the ferrochelatase family.

The protein resides in the cytoplasm. It catalyses the reaction Fe-coproporphyrin III + 2 H(+) = coproporphyrin III + Fe(2+). Its pathway is porphyrin-containing compound metabolism; protoheme biosynthesis. Functionally, involved in coproporphyrin-dependent heme b biosynthesis. Catalyzes the insertion of ferrous iron into coproporphyrin III to form Fe-coproporphyrin III. The sequence is that of Coproporphyrin III ferrochelatase 1 from Bacillus cereus (strain ATCC 10987 / NRS 248).